The primary structure comprises 359 residues: Peptide chain release factor 1 (359 aa).

Gln236 carries the N5-methylglutamine modification. The disordered stretch occupies residues 286-305; it reads KKEMERSTMRKSQIGSGDRS.

The protein belongs to the prokaryotic/mitochondrial release factor family. In terms of processing, methylated by PrmC. Methylation increases the termination efficiency of RF1.

It localises to the cytoplasm. In terms of biological role, peptide chain release factor 1 directs the termination of translation in response to the peptide chain termination codons UAG and UAA. This chain is Peptide chain release factor 1, found in Wolbachia pipientis wMel.